A 30-amino-acid chain; its full sequence is Methanobactin mb-OB3b (30 aa).

The propeptide occupies M1 to A19. A cross-link (2-(3-methylbutanoyl)-5-hydroxyoxazole-4-carbothionic acid (Leu-Cys)) is located at residues L20–C21. Cu(2+) is bound by residues C21 and C27. The cysteines at positions 24 and 29 are disulfide-linked. Residues P26–C27 constitute a cross-link (proline 5-hydroxy-oxazole-4-carbothionic acid (Pro-Cys)).

As to quaternary structure, monomer. In the absence of copper, may exist as a dimer or an oligomer.

Its subcellular location is the secreted. The protein resides in the cytoplasm. The catalysed reaction is 2 superoxide + 2 H(+) = H2O2 + O2. In terms of biological role, chalkophore involved in scavenging, uptake and suppression of toxicity of copper. Each apo-methanobactin (apo-mb) complexes 1 Cu(2+) or Cu(1+) ion to form Cu(1+)-mb (Cu-mb) which is then taken up by the cell. Enhances growth rate in the presence of copper and reduces growth lag upon exposition to elevated levels of copper. Cu-mb contributes to the switchover from soluble methane monooxygenase (sMMO) to the membrane-bound particulate MMO (pMMO) by inducing transcription of pMMO subunit A. It also stimulates the enzymatic activity of pMMO. In the absence of copper, binds other metal ions, like Zn(2+), Ag(1+), Au(3+), Co(2+), Cd(2+), Fe(3+), Hg(2+), Mn(2+), Ni(2+), Pb(2+) or U(6+), but not Ba(2+), Ca(2+), La(2+), Mg(2+) or Sr(2+). Uptake is an active process, which may involve TonB-dependent transporters, and as such does not involve porins. Cu-Mb can be taken up by other methanotrophic bacteria but not by E.coli. Has Cu-dependent superoxide dismutase-like activity. Shows reductant-dependent oxidase and hydrogen peroxide reductase activities. Reduces copper-levels in liver in a rat model of Wilson disease. The sequence is that of Methanobactin mb-OB3b from Methylosinus trichosporium.